The chain runs to 664 residues: Phosphomethylpyrimidine synthase (664 aa).

Composition is skewed to polar residues over residues 1 to 10 (MSTEPLSINP) and 17 to 27 (SATQEPSTSSK). Residues 1 to 37 (MSTEPLSINPLSAKPLSATQEPSTSSKPSRREQRAAA) form a disordered region. Residues asparagine 261, methionine 290, tyrosine 319, histidine 355, 375-377 (SRG), 416-419 (DGLR), and glutamate 455 contribute to the substrate site. Histidine 459 provides a ligand contact to Zn(2+). Tyrosine 482 contacts substrate. Histidine 523 contacts Zn(2+). Cysteine 603, cysteine 606, and cysteine 611 together coordinate [4Fe-4S] cluster.

This sequence belongs to the ThiC family. Homodimer. The cofactor is [4Fe-4S] cluster.

It catalyses the reaction 5-amino-1-(5-phospho-beta-D-ribosyl)imidazole + S-adenosyl-L-methionine = 4-amino-2-methyl-5-(phosphooxymethyl)pyrimidine + CO + 5'-deoxyadenosine + formate + L-methionine + 3 H(+). It functions in the pathway cofactor biosynthesis; thiamine diphosphate biosynthesis. Functionally, catalyzes the synthesis of the hydroxymethylpyrimidine phosphate (HMP-P) moiety of thiamine from aminoimidazole ribotide (AIR) in a radical S-adenosyl-L-methionine (SAM)-dependent reaction. In Pectobacterium atrosepticum (strain SCRI 1043 / ATCC BAA-672) (Erwinia carotovora subsp. atroseptica), this protein is Phosphomethylpyrimidine synthase.